The chain runs to 376 residues: Gibberellic acid methyltransferase 1 (376 aa).

Residues Y22, C64, N69, D104, L105, S136, and F137 each contribute to the S-adenosyl-L-homocysteine site. Position 158 (W158) interacts with gibberellin A9. Residues N175, V179, R265, D266, F268, and N269 each coordinate Mg(2+).

It belongs to the methyltransferase superfamily. Type-7 methyltransferase family. SABATH subfamily. Requires Mg(2+) as cofactor. In terms of tissue distribution, expressed in siliques, developing seeds, anthers and germinating seeds. Not detected in leaves, stems, flowers and roots.

It carries out the reaction gibberellin A9 + S-adenosyl-L-methionine = O-methyl gibberellin A9 + S-adenosyl-L-homocysteine. Its activity is regulated as follows. Up-regulated by K(+) and NH(4+), down-regulated by Zn(2+), Cu(2+), Fe(2+) and Fe(3+). In terms of biological role, methylates the carboxyl group of several gibberellins (GAs). Substrate preference is GA9 &gt; GA20 &gt; GA3 &gt; GA4 &gt; GA34 &gt; GA51 &gt; GA1 &gt; GA19 &gt; GA12. No activity with diterpenes abietic acid and ent-kaurenoic acid. This Arabidopsis thaliana (Mouse-ear cress) protein is Gibberellic acid methyltransferase 1 (GAMT1).